Reading from the N-terminus, the 604-residue chain is Putative sodium-dependent multivitamin transporter (604 aa).

6 consecutive transmembrane segments (helical) span residues 4–24 (LGAW…AIGI), 48–68 (VAPV…ILGV), 78–98 (MFVV…YLII), 134–154 (VLYM…VTGL), 160–180 (IVIV…KAVL), and 188–208 (LLMF…AGSL). 2 N-linked (GlcNAc...) asparagine glycosylation sites follow: N222 and N225. The next 7 helical transmembrane spans lie at 234–254 (HTWF…YGVN), 273–293 (ALWW…FSGL), 331–351 (LAGL…SSII), 389–409 (LFFG…GGLL), 413–433 (LSIF…GMYV), 440–460 (GAIG…FGQP), and 511–531 (ALGF…FALL).

Belongs to the sodium:solute symporter (SSF) (TC 2.A.21) family.

The protein resides in the cell membrane. The sequence is that of Putative sodium-dependent multivitamin transporter from Drosophila melanogaster (Fruit fly).